Consider the following 539-residue polypeptide: Phosphoenolpyruvate carboxykinase (ATP) (539 aa).

Residues R61, Y195, and K201 each contribute to the substrate site. Residues K201, H220, and 238–246 (GLSGTGKTT) each bind ATP. 2 residues coordinate Mn(2+): K201 and H220. D259 lines the Mn(2+) pocket. ATP is bound by residues E287, R325, and T450. Residue R325 participates in substrate binding.

It belongs to the phosphoenolpyruvate carboxykinase (ATP) family. Requires Mn(2+) as cofactor.

The protein localises to the cytoplasm. The catalysed reaction is oxaloacetate + ATP = phosphoenolpyruvate + ADP + CO2. The protein operates within carbohydrate biosynthesis; gluconeogenesis. Functionally, involved in the gluconeogenesis. Catalyzes the conversion of oxaloacetate (OAA) to phosphoenolpyruvate (PEP) through direct phosphoryl transfer between the nucleoside triphosphate and OAA. The polypeptide is Phosphoenolpyruvate carboxykinase (ATP) (Methylorubrum populi (strain ATCC BAA-705 / NCIMB 13946 / BJ001) (Methylobacterium populi)).